The sequence spans 376 residues: Putative glutamate--cysteine ligase 2-1 (376 aa).

This sequence belongs to the glutamate--cysteine ligase type 2 family. YbdK subfamily.

It carries out the reaction L-cysteine + L-glutamate + ATP = gamma-L-glutamyl-L-cysteine + ADP + phosphate + H(+). In terms of biological role, ATP-dependent carboxylate-amine ligase which exhibits weak glutamate--cysteine ligase activity. The polypeptide is Putative glutamate--cysteine ligase 2-1 (Mycolicibacterium smegmatis (strain ATCC 700084 / mc(2)155) (Mycobacterium smegmatis)).